The primary structure comprises 239 residues: LexA repressor (239 aa).

A DNA-binding region (H-T-H motif) is located at residues 26–46 (FDEMKDALDLASKSGIHRLIT). Residues Ser-159 and Lys-197 each act as for autocatalytic cleavage activity in the active site.

Belongs to the peptidase S24 family. As to quaternary structure, homodimer.

It carries out the reaction Hydrolysis of Ala-|-Gly bond in repressor LexA.. Represses a number of genes involved in the response to DNA damage (SOS response), including recA and lexA. In the presence of single-stranded DNA, RecA interacts with LexA causing an autocatalytic cleavage which disrupts the DNA-binding part of LexA, leading to derepression of the SOS regulon and eventually DNA repair. This Rhizobium etli (strain ATCC 51251 / DSM 11541 / JCM 21823 / NBRC 15573 / CFN 42) protein is LexA repressor.